Here is an 867-residue protein sequence, read N- to C-terminus: Transcription factor E2F8 (867 aa).

The interval 38 to 58 (DFGPLTTPTKPKEGSQGEPWT) is disordered. A phosphoserine mark is found at serine 71 and serine 102. 2 consecutive DNA-binding regions follow at residues 113 to 182 (RKEK…TWHG) and 261 to 347 (RKDK…KWTG). Disordered regions lie at residues 408–432 (RRKI…NSAP), 532–616 (QSVT…SGSK), and 771–800 (APEN…GQSV). Residues serine 413 and serine 417 each carry the phosphoserine modification. Composition is skewed to polar residues over residues 413-432 (SAPS…NSAP) and 532-556 (QSVT…TGSK). Over residues 557–567 (DSTDATTEKAA) the composition is skewed to basic and acidic residues. A compositionally biased stretch (polar residues) spans 568–579 (NDTSKASASTRP). Residues 594-604 (RTREPAGERGS) show a composition bias toward basic and acidic residues. A compositionally biased stretch (polar residues) spans 775 to 800 (AGTQQGRATNYDSPVPGQSQPNGQSV).

Belongs to the E2F/DP family. Homodimer and heterodimer: mainly forms homodimers and, to a lesser extent, heterodimers with E2F8. Dimerization is important for DNA-binding. Interacts with HIF1A.

The protein resides in the nucleus. Its function is as follows. Atypical E2F transcription factor that participates in various processes such as angiogenesis and polyploidization of specialized cells. Mainly acts as a transcription repressor that binds DNA independently of DP proteins and specifically recognizes the E2 recognition site 5'-TTTC[CG]CGC-3'. Directly represses transcription of classical E2F transcription factors such as E2F1: component of a feedback loop in S phase by repressing the expression of E2F1, thereby preventing p53/TP53-dependent apoptosis. Plays a key role in polyploidization of cells in placenta and liver by regulating the endocycle, probably by repressing genes promoting cytokinesis and antagonizing action of classical E2F proteins (E2F1, E2F2 and/or E2F3). Required for placental development by promoting polyploidization of trophoblast giant cells. Acts as a promoter of sprouting angiogenesis, possibly by acting as a transcription activator: associates with HIF1A, recognizes and binds the VEGFA promoter, which is different from canonical E2 recognition site, and activates expression of the VEGFA gene. In Homo sapiens (Human), this protein is Transcription factor E2F8 (E2F8).